The primary structure comprises 361 residues: Chorismate synthase (361 aa).

Residues arginine 48 and arginine 54 each contribute to the NADP(+) site. FMN-binding positions include 131–133 (RSS), 243–244 (NA), glycine 287, 302–306 (KPTSS), and arginine 328.

It belongs to the chorismate synthase family. As to quaternary structure, homotetramer. FMNH2 serves as cofactor.

It carries out the reaction 5-O-(1-carboxyvinyl)-3-phosphoshikimate = chorismate + phosphate. It participates in metabolic intermediate biosynthesis; chorismate biosynthesis; chorismate from D-erythrose 4-phosphate and phosphoenolpyruvate: step 7/7. In terms of biological role, catalyzes the anti-1,4-elimination of the C-3 phosphate and the C-6 proR hydrogen from 5-enolpyruvylshikimate-3-phosphate (EPSP) to yield chorismate, which is the branch point compound that serves as the starting substrate for the three terminal pathways of aromatic amino acid biosynthesis. This reaction introduces a second double bond into the aromatic ring system. In Rhodopseudomonas palustris (strain BisA53), this protein is Chorismate synthase.